The chain runs to 433 residues: tRNA-2-methylthio-N(6)-dimethylallyladenosine synthase (433 aa).

Residues 4–119 (KKLFIQTLGC…ITQAIKTPKF (116 aa)) form the MTTase N-terminal domain. The [4Fe-4S] cluster site is built by Cys-13, Cys-50, Cys-82, Cys-151, Cys-155, and Cys-158. In terms of domain architecture, Radical SAM core spans 137 to 370 (RNSIYKSYIN…QNRHSEILDK (234 aa)). The region spanning 373–433 (KKQENKTFKV…KRMVLYGEIV (61 aa)) is the TRAM domain.

Belongs to the methylthiotransferase family. MiaB subfamily. As to quaternary structure, monomer. Requires [4Fe-4S] cluster as cofactor.

The protein resides in the cytoplasm. The enzyme catalyses N(6)-dimethylallyladenosine(37) in tRNA + (sulfur carrier)-SH + AH2 + 2 S-adenosyl-L-methionine = 2-methylsulfanyl-N(6)-dimethylallyladenosine(37) in tRNA + (sulfur carrier)-H + 5'-deoxyadenosine + L-methionine + A + S-adenosyl-L-homocysteine + 2 H(+). Functionally, catalyzes the methylthiolation of N6-(dimethylallyl)adenosine (i(6)A), leading to the formation of 2-methylthio-N6-(dimethylallyl)adenosine (ms(2)i(6)A) at position 37 in tRNAs that read codons beginning with uridine. In Campylobacter jejuni subsp. jejuni serotype O:2 (strain ATCC 700819 / NCTC 11168), this protein is tRNA-2-methylthio-N(6)-dimethylallyladenosine synthase.